The sequence spans 352 residues: Uroporphyrinogen decarboxylase (352 aa).

Substrate is bound by residues 27–31 (RQAGR), D77, Y154, T209, and H325.

The protein belongs to the uroporphyrinogen decarboxylase family. In terms of assembly, homodimer.

The protein localises to the cytoplasm. The catalysed reaction is uroporphyrinogen III + 4 H(+) = coproporphyrinogen III + 4 CO2. Its pathway is porphyrin-containing compound metabolism; protoporphyrin-IX biosynthesis; coproporphyrinogen-III from 5-aminolevulinate: step 4/4. In terms of biological role, catalyzes the decarboxylation of four acetate groups of uroporphyrinogen-III to yield coproporphyrinogen-III. The polypeptide is Uroporphyrinogen decarboxylase (Legionella pneumophila subsp. pneumophila (strain Philadelphia 1 / ATCC 33152 / DSM 7513)).